Here is a 511-residue protein sequence, read N- to C-terminus: Cytochrome P450 71A6 (511 aa).

Transmembrane regions (helical) follow at residues 1-15 (ILIA…LFFL) and 61-77 (VMQL…ASSP). N-linked (GlcNAc...) asparagine glycosylation is found at Asn90, Asn96, and Asn167. Residue Cys450 coordinates heme.

It belongs to the cytochrome P450 family. Heme serves as cofactor.

It is found in the membrane. The polypeptide is Cytochrome P450 71A6 (CYP71A6) (Nepeta racemosa (Catmint)).